Consider the following 296-residue polypeptide: Centromere protein O (296 aa).

Residues valine 17–arginine 105 adopt a coiled-coil conformation.

This sequence belongs to the CENP-O/MCM21 family. As to quaternary structure, component of the CENPA-CAD complex, composed of CENPI, CENPK, CENPL, CENPO, CENPP, CENPQ, CENPR and CENPS. The CENPA-CAD complex interacts with the CENPA-NAC complex, at least composed of CENPA, CENPC, CENPH, CENPM, CENPN, CENPT and CENPU.

It is found in the nucleus. The protein resides in the chromosome. The protein localises to the centromere. It localises to the kinetochore. Functionally, component of the CENPA-CAD (nucleosome distal) complex, a complex recruited to centromeres which is involved in assembly of kinetochore proteins, mitotic progression and chromosome segregation. May be involved in incorporation of newly synthesized CENPA into centromeres via its interaction with the CENPA-NAC complex. Modulates the kinetochore-bound levels of NDC80 complex. This is Centromere protein O (CENPO) from Bos taurus (Bovine).